Here is a 201-residue protein sequence, read N- to C-terminus: MIEFVRGYVDYVCPEYIVIDNNGIGYQIFTPNPFSFQESRDTIVTVYTYQYVREDTLALYGFRTREERTLFAKLLQVSGIGPKGGLAILAAGQPEQLVEAIEQENETFLCKFPGVGKKTARQMILDLKGKLTAVTAKTFPDLFHLQEESARPHLSALEEAIEALKALGYAEREIQKVVPSLMKENLSTDQYVKRALQQLLK.

The interval 1–63 (MIEFVRGYVD…EDTLALYGFR (63 aa)) is domain I. The tract at residues 64–142 (TREERTLFAK…AVTAKTFPDL (79 aa)) is domain II. Residues 143 to 153 (FHLQEESARPH) form a flexible linker region. The domain III stretch occupies residues 153–201 (HLSALEEAIEALKALGYAEREIQKVVPSLMKENLSTDQYVKRALQQLLK).

It belongs to the RuvA family. Homotetramer. Forms an RuvA(8)-RuvB(12)-Holliday junction (HJ) complex. HJ DNA is sandwiched between 2 RuvA tetramers; dsDNA enters through RuvA and exits via RuvB. An RuvB hexamer assembles on each DNA strand where it exits the tetramer. Each RuvB hexamer is contacted by two RuvA subunits (via domain III) on 2 adjacent RuvB subunits; this complex drives branch migration. In the full resolvosome a probable DNA-RuvA(4)-RuvB(12)-RuvC(2) complex forms which resolves the HJ.

The protein localises to the cytoplasm. In terms of biological role, the RuvA-RuvB-RuvC complex processes Holliday junction (HJ) DNA during genetic recombination and DNA repair, while the RuvA-RuvB complex plays an important role in the rescue of blocked DNA replication forks via replication fork reversal (RFR). RuvA specifically binds to HJ cruciform DNA, conferring on it an open structure. The RuvB hexamer acts as an ATP-dependent pump, pulling dsDNA into and through the RuvAB complex. HJ branch migration allows RuvC to scan DNA until it finds its consensus sequence, where it cleaves and resolves the cruciform DNA. The chain is Holliday junction branch migration complex subunit RuvA from Geobacillus sp. (strain WCH70).